A 129-amino-acid polypeptide reads, in one-letter code: Transcription antitermination protein NusB (129 aa).

It belongs to the NusB family.

Functionally, involved in transcription antitermination. Required for transcription of ribosomal RNA (rRNA) genes. Binds specifically to the boxA antiterminator sequence of the ribosomal RNA (rrn) operons. This is Transcription antitermination protein NusB from Staphylococcus aureus (strain MRSA252).